The chain runs to 338 residues: Patr class I histocompatibility antigen, alpha chain G (338 aa).

The signal sequence occupies residues 1–24 (MVVMAPRTLFLLLSGALTLTETWA). The tract at residues 25-114 (GSHSMRYFSA…LRGYYNQSEA (90 aa)) is alpha-1. At 25–308 (GSHSMRYFSA…KQSSLPTIPI (284 aa)) the chain is on the extracellular side. Residue Asn-110 is glycosylated (N-linked (GlcNAc...) asparagine). An alpha-2 region spans residues 115 to 206 (SSHTLQWMIG…ENGKEMLQRA (92 aa)). Cystine bridges form between Cys-125–Cys-188 and Cys-227–Cys-283. The alpha-3 stretch occupies residues 207-298 (DPPKTHVTHH…GLPEPLMLRW (92 aa)). The Ig-like C1-type domain maps to 209–299 (PKTHVTHHPV…LPEPLMLRWK (91 aa)). Residues 299–308 (KQSSLPTIPI) are connecting peptide. Residues 309 to 332 (MGIVAGLVVLAAVVTGAAVAAVLW) traverse the membrane as a helical segment. Residues 333–338 (RKKSSD) lie on the Cytoplasmic side of the membrane.

This sequence belongs to the MHC class I family. Heterodimer of an alpha chain and a beta chain (beta-2-microglobulin). Homodimer; disulfide-linked. Binds to LILRB1 and LILRB2.

It localises to the cell membrane. In terms of biological role, involved in the presentation of foreign antigens to the immune system. The sequence is that of Patr class I histocompatibility antigen, alpha chain G (Patr-G) from Pan troglodytes (Chimpanzee).